Consider the following 95-residue polypeptide: Small ribosomal subunit protein uS19 (95 aa).

The protein belongs to the universal ribosomal protein uS19 family.

Protein S19 forms a complex with S13 that binds strongly to the 16S ribosomal RNA. The chain is Small ribosomal subunit protein uS19 from Thermotoga sp. (strain RQ2).